Here is a 353-residue protein sequence, read N- to C-terminus: Deoxyhypusine synthase (353 aa).

Residues 90–94 (SNLIS), 116–118 (TAG), Glu122, and Asp228 each bind NAD(+). 121-122 (EE) serves as a coordination point for spermidine. Residue Asp233 coordinates spermidine. NAD(+) is bound at residue Gly275. His280 contacts spermidine. 300–301 (TA) is a binding site for NAD(+). Spermidine is bound by residues 306 to 308 (GSD) and 315 to 321 (EAVSWGK). The active-site Nucleophile is Lys321. 334 to 335 (EA) contacts NAD(+).

The protein belongs to the deoxyhypusine synthase family. Homotetramer. NAD(+) is required as a cofactor.

It carries out the reaction [eIF5A protein]-L-lysine + spermidine = [eIF5A protein]-deoxyhypusine + propane-1,3-diamine. It participates in protein modification; eIF5A hypusination. Functionally, catalyzes the NAD-dependent oxidative cleavage of spermidine and the subsequent transfer of the butylamine moiety of spermidine to the epsilon-amino group of a specific lysine residue of the eIF-5A precursor protein to form the intermediate deoxyhypusine residue. In Neurospora crassa (strain ATCC 24698 / 74-OR23-1A / CBS 708.71 / DSM 1257 / FGSC 987), this protein is Deoxyhypusine synthase (dys-1).